We begin with the raw amino-acid sequence, 440 residues long: L-seryl-tRNA(Sec) selenium transferase (440 aa).

Lysine 282 is subject to N6-(pyridoxal phosphate)lysine.

It belongs to the SelA family. Pyridoxal 5'-phosphate is required as a cofactor.

It localises to the cytoplasm. It carries out the reaction L-seryl-tRNA(Sec) + selenophosphate + H(+) = L-selenocysteinyl-tRNA(Sec) + phosphate. It participates in aminoacyl-tRNA biosynthesis; selenocysteinyl-tRNA(Sec) biosynthesis; selenocysteinyl-tRNA(Sec) from L-seryl-tRNA(Sec) (bacterial route): step 1/1. In terms of biological role, converts seryl-tRNA(Sec) to selenocysteinyl-tRNA(Sec) required for selenoprotein biosynthesis. In Campylobacter jejuni subsp. jejuni serotype O:6 (strain 81116 / NCTC 11828), this protein is L-seryl-tRNA(Sec) selenium transferase.